A 702-amino-acid polypeptide reads, in one-letter code: Methionine--tRNA ligase (702 aa).

The short motif at 23 to 33 is the 'HIGH' region element; the sequence is PYANGPLHLGH. Residues C154, C157, C167, and C170 each contribute to the Zn(2+) site. The 'KMSKS' region motif lies at 341–345; sequence KMSKS. K344 is a binding site for ATP. A disordered region spans residues 562-593; sequence LAPPPASAKQQNASMSNTAPPPTAEEPETTAP. Residues 569–578 show a composition bias toward polar residues; that stretch reads AKQQNASMSN. Residues 599-702 form the tRNA-binding domain; sequence DFAKLDLRIG…SSAQPGMPVR (104 aa).

It belongs to the class-I aminoacyl-tRNA synthetase family. MetG type 1 subfamily. As to quaternary structure, homodimer. Requires Zn(2+) as cofactor.

It is found in the cytoplasm. The enzyme catalyses tRNA(Met) + L-methionine + ATP = L-methionyl-tRNA(Met) + AMP + diphosphate. Is required not only for elongation of protein synthesis but also for the initiation of all mRNA translation through initiator tRNA(fMet) aminoacylation. The chain is Methionine--tRNA ligase from Xylella fastidiosa (strain M23).